The chain runs to 349 residues: Protein RecA (349 aa).

Residue 65 to 72 coordinates ATP; the sequence is GPESSGKT.

The protein belongs to the RecA family.

The protein resides in the cytoplasm. Can catalyze the hydrolysis of ATP in the presence of single-stranded DNA, the ATP-dependent uptake of single-stranded DNA by duplex DNA, and the ATP-dependent hybridization of homologous single-stranded DNAs. It interacts with LexA causing its activation and leading to its autocatalytic cleavage. In Acinetobacter baumannii (strain AB307-0294), this protein is Protein RecA.